The chain runs to 69 residues: UPF0248 protein AF_0420 (69 aa).

The protein belongs to the UPF0248 family.

This Archaeoglobus fulgidus (strain ATCC 49558 / DSM 4304 / JCM 9628 / NBRC 100126 / VC-16) protein is UPF0248 protein AF_0420.